The following is a 374-amino-acid chain: UDP-N-acetylglucosamine--N-acetylmuramyl-(pentapeptide) pyrophosphoryl-undecaprenol N-acetylglucosamine transferase (374 aa).

Residues 13–15 (TGG), N124, R165, S193, and Q294 contribute to the UDP-N-acetyl-alpha-D-glucosamine site.

The protein belongs to the glycosyltransferase 28 family. MurG subfamily.

Its subcellular location is the cell inner membrane. The catalysed reaction is di-trans,octa-cis-undecaprenyl diphospho-N-acetyl-alpha-D-muramoyl-L-alanyl-D-glutamyl-meso-2,6-diaminopimeloyl-D-alanyl-D-alanine + UDP-N-acetyl-alpha-D-glucosamine = di-trans,octa-cis-undecaprenyl diphospho-[N-acetyl-alpha-D-glucosaminyl-(1-&gt;4)]-N-acetyl-alpha-D-muramoyl-L-alanyl-D-glutamyl-meso-2,6-diaminopimeloyl-D-alanyl-D-alanine + UDP + H(+). Its pathway is cell wall biogenesis; peptidoglycan biosynthesis. Functionally, cell wall formation. Catalyzes the transfer of a GlcNAc subunit on undecaprenyl-pyrophosphoryl-MurNAc-pentapeptide (lipid intermediate I) to form undecaprenyl-pyrophosphoryl-MurNAc-(pentapeptide)GlcNAc (lipid intermediate II). The polypeptide is UDP-N-acetylglucosamine--N-acetylmuramyl-(pentapeptide) pyrophosphoryl-undecaprenol N-acetylglucosamine transferase (Rhizobium etli (strain CIAT 652)).